Consider the following 269-residue polypeptide: Aquaporin-1 (269 aa).

The Cytoplasmic portion of the chain corresponds to 2–11 (ASEFKKKLFW). The chain crosses the membrane as a helical span at residues 12–29 (RAVVAEFLATTLFVFISI). The Extracellular portion of the chain corresponds to 30–46 (GSALGFKYPVGNNQTAV). Residue Asn42 is glycosylated (N-linked (GlcNAc...) asparagine). Residues 47–65 (QDNVKVSLAFGLSIATLAQ) form a helical membrane-spanning segment. The Cytoplasmic segment spans residues 66-68 (SVG). Residues 69-82 (HISGAHLNPAVTLG) lie within the membrane without spanning it. Positions 76 to 78 (NPA) match the NPA 1 motif. Over 83-90 (LLLSCQIS) the chain is Cytoplasmic. The helical transmembrane segment at 91-109 (IFRALMYIIAQCVGAIVAT) threads the bilayer. At 110 to 133 (AILSGITSSLTGNSLGRNDLADGV) the chain is on the extracellular side. The helical transmembrane segment at 134-153 (NSGQGLGIEIIGTLQLVLCV) threads the bilayer. Residues 154–163 (LATTDRRRRD) lie on the Cytoplasmic side of the membrane. A helical transmembrane segment spans residues 164–181 (LGGSAPLAIGLSVALGHL). Residues 182 to 186 (LAIDY) lie on the Extracellular side of the membrane. The stretch at 187-199 (TGCGINPARSFGS) is an intramembrane region. Positions 192–194 (NPA) match the NPA 2 motif. Residues 200-206 (AVITHNF) are Extracellular-facing. Asn205 carries an N-linked (GlcNAc...) asparagine glycan. The helical transmembrane segment at 207 to 224 (SNHWIFWVGPFIGGALAV) threads the bilayer. Topologically, residues 225-269 (LIYDFILAPRSSDLTDRVKVWTSGQVEEYDLDADDINSRVEMKPK) are cytoplasmic. Ser247 is subject to Phosphoserine. Phosphotyrosine is present on Tyr253. A Phosphoserine modification is found at Ser262.

Belongs to the MIP/aquaporin (TC 1.A.8) family. As to quaternary structure, homotetramer; each monomer provides an independent water pore. Component of the ankyrin-1 complex in the erythrocyte, composed of ANK1, RHCE, RHAG, SLC4A1, EPB42, GYPA, GYPB and AQP1. Interacts with EPHB2; involved in endolymph production in the inner ear. Identified in a complex with STOM. Interacts (via the N-terminal) with ANK1 (via ANK 1-5 repeats). Interacts (via the C-terminal) with EPB42. As to expression, detected in erythrocytes (at protein level). Expressed in a number of tissues including erythrocytes, renal tubules, retinal pigment epithelium, heart, lung, skeletal muscle, kidney and pancreas. Weakly expressed in brain, placenta and liver.

It is found in the cell membrane. It catalyses the reaction H2O(in) = H2O(out). It carries out the reaction nitric oxide(out) = nitric oxide(in). The catalysed reaction is CO2(out) = CO2(in). The enzyme catalyses glycerol(in) = glycerol(out). It catalyses the reaction H2O2(out) = H2O2(in). It carries out the reaction K(+)(in) = K(+)(out). The catalysed reaction is Na(+)(in) = Na(+)(out). Its activity is regulated as follows. The water channel activity is inhibited by P-choloromercuribenzene sulphonate and diethylpyrocarbonate(DPPC). The glycerol channel activity is inhibited by P-choloromercuribenzene sulphonate, diethylpyrocarbonate(DPPC), phloretin and Cu(2+). Inhibited by mercury. In terms of biological role, forms a water channel that facilitates the transport of water across cell membranes, playing a crucial role in water homeostasis in various tissues. Could also be permeable to small solutes including hydrogen peroxide, glycerol and gases such as amonnia (NH3), nitric oxide (NO) and carbon dioxide (CO2). Recruited to the ankyrin-1 complex, a multiprotein complex of the erythrocyte membrane, it could be part of a CO2 metabolon, linking facilitated diffusion of CO2 across the membrane, anion exchange of Cl(-)/HCO3(-) and interconversion of dissolved CO2 and carbonic acid in the cytosol. In vitro, it shows non-selective gated cation channel activity and may be permeable to cations like K(+) and Na(+) in vivo. This Homo sapiens (Human) protein is Aquaporin-1.